We begin with the raw amino-acid sequence, 81 residues long: Kappa-theraphotoxin-Gr2c (81 aa).

The N-terminal stretch at 1-19 is a signal peptide; that stretch reads MKAFFVILGLALLCAYSFA. The propeptide occupies 20–50; the sequence is LEEQDQLSLRNDLLTVMFAENSELTPETEER. Cystine bridges form between Cys52–Cys66, Cys59–Cys71, and Cys65–Cys75.

It belongs to the neurotoxin 30 (phrixotoxin) family. Expressed by the venom gland.

The protein localises to the secreted. Functionally, inhibits sodium channels Nav1.1/SCN1A (IC(50)=5.7 uM), Nav1.2/SCN2A (IC(50)=12 uM), Nav1.4/SCN4A (IC(50)=4 uM), Nav1.6/SCN8A (IC(50)=6.6 uM), Nav1.7/SCN9A (IC(50)=13.6-1030 nM), potassium channels Kv11.1/KCNH2 (IC(50)=4.7 uM), as well as high-voltage-gated calcium channels Cav1.2/CACNA1C (IC(50)= nM). Also blocks mechanosensitive ion channels (also named stretch-activated channels or SACs) and the hypotonic cell swelling induced calcium increase associated with the activation of such channels. It can thus be useful in treating cardiac ventricular disturbances. Also induces analgesia in mammals. This is Kappa-theraphotoxin-Gr2c from Grammostola rosea (Chilean rose tarantula).